A 473-amino-acid polypeptide reads, in one-letter code: Aspartyl/glutamyl-tRNA(Asn/Gln) amidotransferase subunit B (473 aa).

This sequence belongs to the GatB/GatE family. GatB subfamily. Heterotrimer of A, B and C subunits.

It carries out the reaction L-glutamyl-tRNA(Gln) + L-glutamine + ATP + H2O = L-glutaminyl-tRNA(Gln) + L-glutamate + ADP + phosphate + H(+). It catalyses the reaction L-aspartyl-tRNA(Asn) + L-glutamine + ATP + H2O = L-asparaginyl-tRNA(Asn) + L-glutamate + ADP + phosphate + 2 H(+). Functionally, allows the formation of correctly charged Asn-tRNA(Asn) or Gln-tRNA(Gln) through the transamidation of misacylated Asp-tRNA(Asn) or Glu-tRNA(Gln) in organisms which lack either or both of asparaginyl-tRNA or glutaminyl-tRNA synthetases. The reaction takes place in the presence of glutamine and ATP through an activated phospho-Asp-tRNA(Asn) or phospho-Glu-tRNA(Gln). The sequence is that of Aspartyl/glutamyl-tRNA(Asn/Gln) amidotransferase subunit B from Methanococcoides burtonii (strain DSM 6242 / NBRC 107633 / OCM 468 / ACE-M).